A 529-amino-acid polypeptide reads, in one-letter code: Peptide chain release factor 3 (529 aa).

The 269-residue stretch at 11–279 (AKRRTFAIIS…GLVDWAPKPQ (269 aa)) folds into the tr-type G domain. GTP contacts are provided by residues 20–27 (SHPDAGKT), 88–92 (DTPGH), and 142–145 (NKLD).

This sequence belongs to the TRAFAC class translation factor GTPase superfamily. Classic translation factor GTPase family. PrfC subfamily.

Its subcellular location is the cytoplasm. Functionally, increases the formation of ribosomal termination complexes and stimulates activities of RF-1 and RF-2. It binds guanine nucleotides and has strong preference for UGA stop codons. It may interact directly with the ribosome. The stimulation of RF-1 and RF-2 is significantly reduced by GTP and GDP, but not by GMP. In Idiomarina loihiensis (strain ATCC BAA-735 / DSM 15497 / L2-TR), this protein is Peptide chain release factor 3.